Here is a 24-residue protein sequence, read N- to C-terminus: Xenoposin precursor fragment B2 (24 aa).

As to expression, expressed by the skin glands.

The protein resides in the secreted. In terms of biological role, has antimicrobial activity against Gram-negative bacterium E.coli ATCC 25922 (MIC=100 uM), Gram-positive bacterium S.auerus ATCC 25923 (MIC=25 uM). This chain is Xenoposin precursor fragment B2, found in Xenopus borealis (Kenyan clawed frog).